Here is a 331-residue protein sequence, read N- to C-terminus: ADP,ATP carrier protein 2, mitochondrial (331 aa).

Solcar repeat units follow at residues 29-122 (KNFA…FKRM), 134-226 (KWFG…LKPV), and 238-320 (ASFA…LQIL). Helical transmembrane passes span 31–58 (FAID…VKLL), 99–123 (TANV…KRMF), 132–152 (YWKW…SSLF), 202–223 (FNIS…YDSL), and 237–257 (FASF…SYPI). Residues Arg-104 and Lys-116 each contribute to the ADP site. Arg-261 lines the ADP pocket. Positions 261–266 (RRRMMM) are important for transport activity. Residues 261–266 (RRRMMM) carry the Nucleotide carrier signature motif motif. The chain crosses the membrane as a helical span at residues 297-317 (AGANILRAIAGAGVLSGYDQL).

Belongs to the mitochondrial carrier (TC 2.A.29) family. In terms of assembly, monomer.

Its subcellular location is the mitochondrion inner membrane. It catalyses the reaction ADP(in) + ATP(out) = ADP(out) + ATP(in). The matrix-open state (m-state) is inhibited by the membrane-permeable bongkrekic acid (BKA). The cytoplasmic-open state (c-state) is inhibited by the membrane-impermeable toxic inhibitor carboxyatractyloside (CATR). ADP:ATP antiporter that mediates import of ADP into the mitochondrial matrix for ATP synthesis, and export of ATP out to fuel the cell. Cycles between the cytoplasmic-open state (c-state) and the matrix-open state (m-state): operates by the alternating access mechanism with a single substrate-binding site intermittently exposed to either the cytosolic (c-state) or matrix (m-state) side of the inner mitochondrial membrane. The polypeptide is ADP,ATP carrier protein 2, mitochondrial (ANT-G2) (Triticum aestivum (Wheat)).